Consider the following 230-residue polypeptide: Increased recombination centers protein 19 (230 aa).

It belongs to the IRC19 family.

Functionally, involved in sporulation and maintenance of the mitochondrial DNA. Is probably involved in a pathway contributing to genomic integrity. This is Increased recombination centers protein 19 (IRC19) from Saccharomyces cerevisiae (strain ATCC 204508 / S288c) (Baker's yeast).